The sequence spans 181 residues: Peptidyl-tRNA hydrolase 2, mitochondrial (181 aa).

The helical transmembrane segment at 10 to 32 (YLVHPGTLSLAAGVACGMCLGWG) threads the bilayer. Residues Lys78, Lys83, Lys97, Lys108, Lys117, and Lys179 each participate in a glycyl lysine isopeptide (Lys-Gly) (interchain with G-Cter in ubiquitin) cross-link.

The protein belongs to the PTH2 family. As to quaternary structure, monomer. In terms of processing, ubiquitinated by PRKN during mitophagy, leading to its degradation and enhancement of mitophagy. Deubiquitinated by USP30.

It is found in the mitochondrion outer membrane. The catalysed reaction is an N-acyl-L-alpha-aminoacyl-tRNA + H2O = an N-acyl-L-amino acid + a tRNA + H(+). Peptidyl-tRNA hydrolase which releases tRNAs from the ribosome during protein synthesis. Promotes caspase-independent apoptosis by regulating the function of two transcriptional regulators, AES and TLE1. The protein is Peptidyl-tRNA hydrolase 2, mitochondrial (Ptrh2) of Mus musculus (Mouse).